The following is a 186-amino-acid chain: MIEASKLKAGMTFETADGKLIRVLEASHHKPGKGNTIMRMKLRDVRTGSTFDTSYRPEEKFEQAIIETVPAQYLYQMDDTAYFMNTETYDQYEIPVVNVEDELKYILENSDVKIQFYGSEVIGVTVPTTVELVVTETQPSIKGATVTGSGKPATLETGLVVNVPDFIEVGQKLIINTAEGTYVSRA.

This sequence belongs to the elongation factor P family.

It localises to the cytoplasm. Its pathway is protein biosynthesis; polypeptide chain elongation. Functionally, involved in peptide bond synthesis. Stimulates efficient translation and peptide-bond synthesis on native or reconstituted 70S ribosomes in vitro. Probably functions indirectly by altering the affinity of the ribosome for aminoacyl-tRNA, thus increasing their reactivity as acceptors for peptidyl transferase. The polypeptide is Elongation factor P (Streptococcus gordonii (strain Challis / ATCC 35105 / BCRC 15272 / CH1 / DL1 / V288)).